A 666-amino-acid polypeptide reads, in one-letter code: MRFSTLVSLAAWAAAALACDSCSEPGKPAEHKRLVRRMQPEALGALTKPKGPLEWGQINFLHTTDTHGWLEGHLKEQNYGADWGDYSSFVKHMRQKADRLRVDLLLIDCGDLHDGNGLSDSTSPNGVISNEIFSRVDYDLLSIGNHELYVTDVAYETFANFSKVYGERYVTSNVQIINKETGEYEYIGSKYRYFTTKHGLKVMAFGVLFDFTGNSNVSKVIKAADLVQESWFIDAVKTPKPVDLFIIFGHTPARTDDKFPTLRTLRQKIQELRPGVPIQAFGGHNHVRDFVVYDETSTALGSGRYCETLGWLSMTGINSRTFRGSMKPRGVPNPTRRAIKGNATTSTQPYQHPRKGLDLRYARRYLDWNRLTFAYHASKSQDRQFDTQKGLKITHDITDARKQLNTSTVLGCVPETYCMSCVPFEAKNNIYQLVIDMLAKVVVKEDRADKPRLLLLNTGGVRFDLVKGPFTKDDEYIVYPFKNQFQYLPDVPYSIAKELLDALNKGPYQRRSEEYSPMAPQLSTNEVCANPSPEFVQLKRREAPQPYRPITRRTIDSSMLYPGYVTSDDFGLDGDDTPHSKIPYFKVPIDIQANASFPTNGSMPTVVDLAFVDYIGAKYVIPALNKLGGKYSASDIQSYKDFGSSSFLREYALEFWQEGLPNCTTN.

The signal sequence occupies residues 1-18 (MRFSTLVSLAAWAAAALA). Asparagine 160, asparagine 216, asparagine 342, asparagine 405, asparagine 594, asparagine 600, and asparagine 662 each carry an N-linked (GlcNAc...) asparagine glycan. The interval 323–353 (RGSMKPRGVPNPTRRAIKGNATTSTQPYQHP) is disordered.

It is found in the secreted. The chain is Secreted protein ARB_01864 from Arthroderma benhamiae (strain ATCC MYA-4681 / CBS 112371) (Trichophyton mentagrophytes).